A 588-amino-acid polypeptide reads, in one-letter code: Protein kintoun (588 aa).

3 disordered regions span residues 199–223, 338–498, and 510–535; these read PGYE…PENS, PPLE…SSQE, and AANV…ADED. Over residues 202–212 the composition is skewed to basic and acidic residues; sequence EAKEPPEERDL. Positions 350–361 are enriched in polar residues; it reads PNPTSDPQNENQ. Composition is skewed to basic and acidic residues over residues 362 to 382 and 393 to 433; these read TRVE…HQRG and QVLE…KFEL. Polar residues predominate over residues 435 to 447; the sequence is DVQQENKGNCSNT. Basic and acidic residues predominate over residues 448 to 460; sequence KEVKCCRRTKDSL.

The protein belongs to the PIH1 family. Kintoun subfamily.

The protein resides in the cytoplasm. It is found in the dynein axonemal particle. Its function is as follows. Required for cytoplasmic pre-assembly of axonemal dyneins, thereby playing a central role in motility in cilia and flagella. Involved in pre-assembly of dynein arm complexes in the cytoplasm before intraflagellar transport loads them for the ciliary compartment. The protein is Protein kintoun of Oryzias latipes (Japanese rice fish).